We begin with the raw amino-acid sequence, 317 residues long: tRNA pseudouridine synthase B (317 aa).

Aspartate 47 acts as the Nucleophile in catalysis.

This sequence belongs to the pseudouridine synthase TruB family. Type 1 subfamily.

The catalysed reaction is uridine(55) in tRNA = pseudouridine(55) in tRNA. Responsible for synthesis of pseudouridine from uracil-55 in the psi GC loop of transfer RNAs. The chain is tRNA pseudouridine synthase B from Shewanella sp. (strain MR-4).